The chain runs to 186 residues: Dynactin subunit 3 (186 aa).

Ala-2 carries the N-acetylalanine modification. A coiled-coil region spans residues 135-157 (QQQDQCVEITEESKALLEEYNKT).

The protein belongs to the dynactin subunit 3 family. In terms of assembly, subunit of dynactin, a multiprotein complex part of a tripartite complex with dynein and a adapter, such as BICDL1, BICD2 or HOOK3. The dynactin complex is built around ACTR1A/ACTB filament and consists of an actin-related filament composed of a shoulder domain, a pointed end and a barbed end. Its length is defined by its flexible shoulder domain. The soulder is composed of 2 DCTN1 subunits, 4 DCTN2 and 2 DCTN3. The 4 DCNT2 (via N-terminus) bind the ACTR1A filament and act as molecular rulers to determine the length. The pointed end is important for binding dynein-dynactin cargo adapters. Consists of 4 subunits: ACTR10, DCNT4, DCTN5 and DCTN6. The barbed end is composed of a CAPZA1:CAPZB heterodimers, which binds ACTR1A/ACTB filament and dynactin and stabilizes dynactin.

Its subcellular location is the cytoplasm. It localises to the cytoskeleton. The protein resides in the microtubule organizing center. The protein localises to the centrosome. It is found in the chromosome. Its subcellular location is the centromere. It localises to the kinetochore. The protein resides in the spindle. The protein localises to the cleavage furrow. It is found in the midbody. Part of the dynactin complex that activates the molecular motor dynein for ultra-processive transport along microtubules. Together with dynein may be involved in spindle assembly and cytokinesis. The chain is Dynactin subunit 3 (DCTN3) from Bos taurus (Bovine).